A 169-amino-acid chain; its full sequence is Cilia- and flagella-associated protein 276 (169 aa).

Disordered regions lie at residues 26–45 (SKKLPYKNPTHLAQQQEPWS) and 150–169 (HTAATNGGYSRKKDGGFFST). Positions 36-45 (HLAQQQEPWS) are enriched in polar residues. The span at 160–169 (RKKDGGFFST) shows a compositional bias: basic and acidic residues.

Microtubule inner protein component of sperm flagellar doublet microtubules. In terms of tissue distribution, expressed in cerebrum, cerebellum, gastrocnemius muscle, spinal cord and lung tissues.

Its subcellular location is the cytoplasm. It localises to the cytoskeleton. It is found in the flagellum axoneme. The protein localises to the cilium axoneme. Functionally, microtubule inner protein (MIP) part of the dynein-decorated doublet microtubules (DMTs) in cilia axoneme, which is required for motile cilia beating. May play an important role for the maintenance of myelin-axon integrity. May affect intracellular Ca(2+) homeostasis. The chain is Cilia- and flagella-associated protein 276 from Homo sapiens (Human).